Consider the following 278-residue polypeptide: GTPase Era (278 aa).

The Era-type G domain maps to 7 to 168 (YCGYIAIVGK…ENLIYPYLPN (162 aa)). The tract at residues 15–22 (GKPNVGKS) is G1. 15–22 (GKPNVGKS) is a binding site for GTP. Positions 41 to 45 (NTTQK) are G2. A G3 region spans residues 62-65 (DTPG). Residues 62–66 (DTPGI) and 117–120 (NKID) each bind GTP. Positions 117–120 (NKID) are G4. A G5 region spans residues 147–149 (ISA). The KH type-2 domain occupies 199-276 (LRDELPSIIT…YLIIWVKVKI (78 aa)).

Belongs to the TRAFAC class TrmE-Era-EngA-EngB-Septin-like GTPase superfamily. Era GTPase family. Monomer.

Its subcellular location is the cytoplasm. It is found in the cell membrane. Its function is as follows. An essential GTPase that binds both GDP and GTP, with rapid nucleotide exchange. Plays a role in 16S rRNA processing and 30S ribosomal subunit biogenesis and possibly also in cell cycle regulation and energy metabolism. In Buchnera aphidicola subsp. Schizaphis graminum (strain Sg), this protein is GTPase Era.